A 369-amino-acid chain; its full sequence is UPF0754 membrane protein Aflv_2299 (369 aa).

Transmembrane regions (helical) follow at residues 1–21 (MGLFLYLLFMIVVGAFIGGMT) and 347–367 (YLGALLGGIIGLIQGCITFFV).

The protein belongs to the UPF0754 family.

It localises to the cell membrane. This chain is UPF0754 membrane protein Aflv_2299, found in Anoxybacillus flavithermus (strain DSM 21510 / WK1).